The primary structure comprises 211 residues: ATP phosphoribosyltransferase (211 aa).

Belongs to the ATP phosphoribosyltransferase family. Short subfamily. As to quaternary structure, heteromultimer composed of HisG and HisZ subunits.

The protein resides in the cytoplasm. The catalysed reaction is 1-(5-phospho-beta-D-ribosyl)-ATP + diphosphate = 5-phospho-alpha-D-ribose 1-diphosphate + ATP. It functions in the pathway amino-acid biosynthesis; L-histidine biosynthesis; L-histidine from 5-phospho-alpha-D-ribose 1-diphosphate: step 1/9. Catalyzes the condensation of ATP and 5-phosphoribose 1-diphosphate to form N'-(5'-phosphoribosyl)-ATP (PR-ATP). Has a crucial role in the pathway because the rate of histidine biosynthesis seems to be controlled primarily by regulation of HisG enzymatic activity. This Bacillus cereus (strain G9842) protein is ATP phosphoribosyltransferase.